The primary structure comprises 221 residues: Urease accessory protein UreF (221 aa).

The protein belongs to the UreF family. In terms of assembly, ureD, UreF and UreG form a complex that acts as a GTP-hydrolysis-dependent molecular chaperone, activating the urease apoprotein by helping to assemble the nickel containing metallocenter of UreC. The UreE protein probably delivers the nickel.

It localises to the cytoplasm. In terms of biological role, required for maturation of urease via the functional incorporation of the urease nickel metallocenter. The polypeptide is Urease accessory protein UreF (Vibrio parahaemolyticus).